Consider the following 60-residue polypeptide: Large ribosomal subunit protein bL32 (60 aa).

Residues 1 to 23 are disordered; sequence MAVPKRKKSKSRRNMHRSHHAIK.

This sequence belongs to the bacterial ribosomal protein bL32 family.

This Wolbachia sp. subsp. Brugia malayi (strain TRS) protein is Large ribosomal subunit protein bL32.